The chain runs to 583 residues: SHC-transforming protein 1 (583 aa).

M1 bears the N-acetylmethionine mark. The segment at 1–92 (MDLLPPKPKY…EPGRAADDGE (92 aa)) is disordered. Over residues 16–44 (ESLSSLEEGASGSTPPEELPSPSASSLGP) the composition is skewed to low complexity. Phosphoserine occurs at positions 36 and 139. K154 is modified (N6-acetyllysine). One can recognise a PID domain in the interval 156-339 (MGPGVSYLVR…AGFDGSAWDE (184 aa)). The tract at residues 340 to 487 (EEEEPPDHQY…SMAEQLRGEP (148 aa)) is CH1. Phosphotyrosine is present on residues Y349 and Y350. The segment covering 372-384 (AAPGAARPTAPNA) has biased composition (low complexity). The tract at residues 372–415 (AAPGAARPTAPNAQTPSHLGATLPVGQPVGGDPEVRKQMPPPPP) is disordered. At Y427 the chain carries Phosphotyrosine. S453 carries the phosphoserine modification. In terms of domain architecture, SH2 spans 488–579 (WFHGKLSRRE…GSELCLQQPV (92 aa)).

As to quaternary structure, interacts with CPNE3; this interaction may mediate the binding of CPNE3 with ERBB2. Interacts with the NPXY motif of tyrosine-phosphorylated IGF1R and INSR in vitro via the PID domain. Once activated, binds to GRB2. Interacts with tyrosine-phosphorylated CD3T and DDR2. Interacts with the N-terminal region of SH2B2. Interacts with phosphorylated LRP1 and IRS4. Interacts with INPP5D/SHIP1 and INPPL1/SHIP2. Interacts with TRIM31. Interacts with PTPN6/SHP (tyrosine phosphorylated). Identified in a complex containing FGFR4, NCAM1, CDH2, PLCG1, FRS2, SRC, SHC1, GAP43 and CTT. Interacts with ALK, GAB2, GRB7 and KIT. Interacts with FLT4 (tyrosine-phosphorylated). Interacts with EPHB1 and GRB2; activates the MAPK/ERK cascade to regulate cell migration. Interacts with PDGFRB (tyrosine-phosphorylated). Interacts with ERBB4. Interacts with TEK/TIE2 (tyrosine-phosphorylated). Interacts with the Trk receptors NTRK1, NTRK2 and NTRK3; in a phosphotyrosine-dependent manner. Interacts with PTK2/FAK1. Interacts with CEACAM1; this interaction is CEACAM1-phosphorylation-dependent and mediates interaction with EGFR or INSR resulting in decrease coupling of SHC1 to the MAPK3/ERK1-MAPK1/ERK2 pathway. Interacts (via PID domain) with PEAK1 (when phosphorylated at 'Tyr-1188'). Found in a complex with PPP1CA, PPP1CC, SHC1 and PEAK1. (Microbial infection) Interacts with herpes simplex virus 1 UL46. Post-translationally, phosphorylated by activated epidermal growth factor receptor. Phosphorylated in response to FLT4 and KIT signaling. Isoform p46Shc and isoform p52Shc are phosphorylated on tyrosine residues of the Pro-rich domain. Isoform p66Shc is phosphorylated on Ser-36 by PRKCB upon treatment with insulin, hydrogen peroxide or irradiation with ultraviolet light. Tyrosine phosphorylated in response to FLT3 signaling. Tyrosine phosphorylated by activated PTK2B/PYK2. Tyrosine phosphorylated by ligand-activated ALK. Tyrosine phosphorylated by ligand-activated PDGFRB. Tyrosine phosphorylated by TEK/TIE2. May be tyrosine phosphorylated by activated PTK2/FAK1; tyrosine phosphorylation was seen in an astrocytoma biopsy, where PTK2/FAK1 kinase activity is high, but not in normal brain tissue. Isoform p52Shc dephosphorylation by PTPN2 may regulate interaction with GRB2. Widely expressed. Expressed in neural stem cells but absent in mature neurons.

The protein localises to the cytoplasm. The protein resides in the cell junction. Its subcellular location is the focal adhesion. It is found in the mitochondrion matrix. It localises to the mitochondrion. In terms of biological role, signaling adapter that couples activated growth factor receptors to signaling pathways. Participates in a signaling cascade initiated by activated KIT and KITLG/SCF. Isoform p46Shc and isoform p52Shc, once phosphorylated, couple activated receptor tyrosine kinases to Ras via the recruitment of the GRB2/SOS complex and are implicated in the cytoplasmic propagation of mitogenic signals. Isoform p46Shc and isoform p52Shc may thus function as initiators of the Ras signaling cascade in various non-neuronal systems. Isoform p66Shc does not mediate Ras activation, but is involved in signal transduction pathways that regulate the cellular response to oxidative stress and life span. Isoform p66Shc acts as a downstream target of the tumor suppressor p53 and is indispensable for the ability of stress-activated p53 to induce elevation of intracellular oxidants, cytochrome c release and apoptosis. The expression of isoform p66Shc has been correlated with life span. Participates in signaling downstream of the angiopoietin receptor TEK/TIE2, and plays a role in the regulation of endothelial cell migration and sprouting angiogenesis. This chain is SHC-transforming protein 1 (SHC1), found in Homo sapiens (Human).